The chain runs to 624 residues: MSTASPLHHGHGNGSYANSPAPTGVTGRDAGVAAAAVADSAVRSGSVPASASGSAPGSASGSMYGEAHTQHHTGHHHYSAHHTHSHGALTSPVNGGHSSSWSPYGYPAAPVYGGSPSPYGHNAYSQYASGYGYANGTAHHVATAPTTPSATSTAYHTGVNGMMMHHGQHAGYGYSSHHLGSHTPTHTHTHSSAYFMNGDGAHSHLNSSAHLTSPSYTTAPQYSTQLPLAGRHRVTTTLWEDEGTLCFQVDARGVCVARRHDNNMINGTKLLNVCGMSRGKRDGILKNEKERIVVKVGAMHLKGVWISFARAKQLAEQNGIADALYPLFEPNIQSFLYHPDNYPRTAAVIAAAQERQAQRQRAPGGQPSPGANGTSQAPPLMRANTTPSNGDTSTFSSGLSSLGSWTGSHDQGHASAPTTAQPSPSSMHNGATQMHMSLSNHGTASPTYAQSQQQQQQQQQQQQQQQQQQQQQQQQAYPMTAAQQLARPSVGDRRQSAPISLNNSVGHAENPYGATNLGGAANGGLVNGARKVSGLKRSWNDADDLNGSAAASPTERDMQRSGSGGSNGLKLDGDDLHSPDSSDDRLAKKTRGMPQRGGGATTAMPSMSTNMLMGVGNGSGIHHE.

Disordered stretches follow at residues 1-24 (MSTASPLHHGHGNGSYANSPAPTG) and 43-99 (RSGS…GHSS). A compositionally biased stretch (low complexity) spans 43–62 (RSGSVPASASGSAPGSASGS). Positions 70-85 (QHHTGHHHYSAHHTHS) are enriched in basic residues. Positions 233–339 (RVTTTLWEDE…PNIQSFLYHP (107 aa)) constitute an HTH APSES-type domain. Positions 267–288 (GTKLLNVCGMSRGKRDGILKNE) form a DNA-binding region, H-T-H motif. The segment covering 352–362 (AQERQAQRQRA) has biased composition (low complexity). Disordered regions lie at residues 352–456 (AQER…QQQQ), 474–504 (QQAYPMTAAQQLARPSVGDRRQSAPISLNNS), and 538–624 (SWND…IHHE). Residues 369–391 (PGANGTSQAPPLMRANTTPSNGD) are compositionally biased toward polar residues. Residues 392–426 (TSTFSSGLSSLGSWTGSHDQGHASAPTTAQPSPSS) are compositionally biased toward low complexity. Residues 427-451 (MHNGATQMHMSLSNHGTASPTYAQS) show a composition bias toward polar residues. Residues 571 to 587 (LDGDDLHSPDSSDDRLA) show a composition bias toward basic and acidic residues. Over residues 615–624 (VGNGSGIHHE) the composition is skewed to gly residues.

It belongs to the EFG1/PHD1/stuA family. Phosphorylated but is not a target of cAMP signaling.

The protein resides in the nucleus. Its function is as follows. Transcription factor that regulates asexual reproduction. Binds the StuA-response elements (StRE) with the consensus sequence 5'-(A/T)CGCG(T/A)N(A/C)-3' at the promoters of target genes. Regulates dimorphism, virulence, and the sporulation program. Required for mating, gall induction, and sporogenesis in maize tissue. Regulates expression of the filament-down-regulated gene UM00205 and the teliospore-specific gene ssp1. This is Cell pattern formation-associated protein ust1 (ust1) from Mycosarcoma maydis (Corn smut fungus).